A 159-amino-acid polypeptide reads, in one-letter code: Ribosomal RNA large subunit methyltransferase H (159 aa).

Residues leucine 76, glycine 108, and 127-132 (FSKMTF) contribute to the S-adenosyl-L-methionine site.

Belongs to the RNA methyltransferase RlmH family. In terms of assembly, homodimer.

It localises to the cytoplasm. It catalyses the reaction pseudouridine(1915) in 23S rRNA + S-adenosyl-L-methionine = N(3)-methylpseudouridine(1915) in 23S rRNA + S-adenosyl-L-homocysteine + H(+). Functionally, specifically methylates the pseudouridine at position 1915 (m3Psi1915) in 23S rRNA. In Bacillus velezensis (strain DSM 23117 / BGSC 10A6 / LMG 26770 / FZB42) (Bacillus amyloliquefaciens subsp. plantarum), this protein is Ribosomal RNA large subunit methyltransferase H.